Consider the following 42-residue polypeptide: Photosystem I reaction center subunit IX (42 aa).

A helical transmembrane segment spans residues 7-27 (FLSTAPVLIMALLTFTAGLLI).

The protein belongs to the PsaJ family.

The protein resides in the cellular thylakoid membrane. In terms of biological role, may help in the organization of the PsaE and PsaF subunits. This chain is Photosystem I reaction center subunit IX, found in Rippkaea orientalis (strain PCC 8801 / RF-1) (Cyanothece sp. (strain PCC 8801)).